We begin with the raw amino-acid sequence, 423 residues long: Tyrosine--tRNA ligase (423 aa).

An L-tyrosine-binding site is contributed by tyrosine 35. Positions 40–49 (PTAASLHVGH) match the 'HIGH' region motif. L-tyrosine-binding residues include tyrosine 170 and glutamine 174. Positions 231–235 (KFGKS) match the 'KMSKS' region motif. Lysine 234 contributes to the ATP binding site. The region spanning 353 to 419 (GPLVDLLVEV…GKKNLAAVEV (67 aa)) is the S4 RNA-binding domain.

This sequence belongs to the class-I aminoacyl-tRNA synthetase family. TyrS type 1 subfamily. In terms of assembly, homodimer.

Its subcellular location is the cytoplasm. It carries out the reaction tRNA(Tyr) + L-tyrosine + ATP = L-tyrosyl-tRNA(Tyr) + AMP + diphosphate + H(+). In terms of biological role, catalyzes the attachment of tyrosine to tRNA(Tyr) in a two-step reaction: tyrosine is first activated by ATP to form Tyr-AMP and then transferred to the acceptor end of tRNA(Tyr). In Streptomyces griseus subsp. griseus (strain JCM 4626 / CBS 651.72 / NBRC 13350 / KCC S-0626 / ISP 5235), this protein is Tyrosine--tRNA ligase.